The chain runs to 199 residues: CASP-like protein 4B1 (199 aa).

Residues 1-32 are disordered; that stretch reads MAMVASPDDIVKSPLPPPPPPPPPPLPPAHKD. Residues 1–53 lie on the Cytoplasmic side of the membrane; sequence MAMVASPDDIVKSPLPPPPPPPPPPLPPAHKDKAAYNPYSGCPAHGGDDGLDG. Residues 14–28 are compositionally biased toward pro residues; the sequence is PLPPPPPPPPPPLPP. A helical transmembrane segment spans residues 54 to 74; it reads IVLVLRAAAALLALVAMALVA. Topologically, residues 75 to 91 are extracellular; the sequence is SCRHGDWMEFTRYQEYR. Residues 92–112 form a helical membrane-spanning segment; it reads YLLGVAVVASLYSALQAARTF. The Cytoplasmic portion of the chain corresponds to 113 to 127; the sequence is RRMRAGTAYAATFLD. A helical transmembrane segment spans residues 128–148; the sequence is FAGDQAVGYLLITASSAALPI. Residues 149 to 163 are Extracellular-facing; sequence TIRMRSAVVNTFTDV. Residues 164 to 184 traverse the membrane as a helical segment; the sequence is VAASISFAFLAFAALAFSALI. The Cytoplasmic portion of the chain corresponds to 185–199; that stretch reads AGFRLSSSSSSAYNY.

This sequence belongs to the Casparian strip membrane proteins (CASP) family. As to quaternary structure, homodimer and heterodimers.

It localises to the cell membrane. The polypeptide is CASP-like protein 4B1 (Oryza sativa subsp. japonica (Rice)).